The chain runs to 489 residues: Kynureninase 2 (489 aa).

Positions 1–12 (MDASAAISQLRQ) are enriched in polar residues. The segment at 1–25 (MDASAAISQLRQGQKPEWPQNANTS) is disordered. Pyridoxal 5'-phosphate-binding positions include Leu149, Thr150, 177–180 (FPSD), Asp261, His264, and Tyr286. Lys287 is modified (N6-(pyridoxal phosphate)lysine). Trp317 and Asn345 together coordinate pyridoxal 5'-phosphate.

This sequence belongs to the kynureninase family. Homodimer. Pyridoxal 5'-phosphate serves as cofactor.

It is found in the cytoplasm. It carries out the reaction L-kynurenine + H2O = anthranilate + L-alanine + H(+). It catalyses the reaction 3-hydroxy-L-kynurenine + H2O = 3-hydroxyanthranilate + L-alanine + H(+). Its pathway is amino-acid degradation; L-kynurenine degradation; L-alanine and anthranilate from L-kynurenine: step 1/1. The protein operates within cofactor biosynthesis; NAD(+) biosynthesis; quinolinate from L-kynurenine: step 2/3. Functionally, catalyzes the cleavage of L-kynurenine (L-Kyn) and L-3-hydroxykynurenine (L-3OHKyn) into anthranilic acid (AA) and 3-hydroxyanthranilic acid (3-OHAA), respectively. This Phaeosphaeria nodorum (strain SN15 / ATCC MYA-4574 / FGSC 10173) (Glume blotch fungus) protein is Kynureninase 2.